An 881-amino-acid polypeptide reads, in one-letter code: Tyrosine-protein kinase receptor TYRO3 (881 aa).

Positions 1-28 are cleaved as a signal peptide; it reads MVNPGPPGLIAGLLLAALSLSSVDGTKA. 2 Ig-like C2-type domains span residues 29 to 114 and 125 to 206; these read LGFV…KSVS and PYFT…AIVE. The Extracellular portion of the chain corresponds to 29 to 414; the sequence is LGFVGHGYNM…QRHPHTRMSW (386 aa). N-linked (GlcNAc...) asparagine glycosylation is found at Asn37 and Asn49. The cysteines at positions 50 and 103 are disulfide-linked. Asn143 carries N-linked (GlcNAc...) asparagine glycosylation. A disulfide bond links Cys146 and Cys189. Fibronectin type-III domains are found at residues 213–306 and 311–401; these read PPFN…TKEK and IPQN…SKEE. N-linked (GlcNAc...) asparagine glycans are attached at residues Asn216, Asn279, Asn351, and Asn365. The helical transmembrane segment at 415–435 threads the bilayer; it reads VPMVLGILTALVTVVAMTLIF. The Cytoplasmic segment spans residues 436–881; it reads LRKGRKETRF…MQEEQVVITL (446 aa). A Protein kinase domain is found at 503–774; it reads FTLGRTLGKG…VDLKRRLEAI (272 aa). ATP contacts are provided by residues 509–517 and Lys535; that span reads LGKGEFGSV. Asp640 serves as the catalytic Proton acceptor. A Phosphotyrosine; by autocatalysis modification is found at Tyr671. The disordered stretch occupies residues 846-881; sequence EWSSSAQNGEARGLLHEEEEEEEEEEMQEEQVVITL. Residues 862–874 show a composition bias toward acidic residues; sequence EEEEEEEEEEMQE.

This sequence belongs to the protein kinase superfamily. Tyr protein kinase family. AXL/UFO subfamily. In terms of processing, tyrosine phosphorylated upon receptor stimulation.

The protein localises to the cell membrane. It carries out the reaction L-tyrosyl-[protein] + ATP = O-phospho-L-tyrosyl-[protein] + ADP + H(+). Functionally, may be involved in cell adhesion processes, particularly in the central nervous system. The chain is Tyrosine-protein kinase receptor TYRO3 (tyro3) from Xenopus tropicalis (Western clawed frog).